Consider the following 257-residue polypeptide: NAD-dependent protein deacylase (257 aa).

In terms of domain architecture, Deacetylase sirtuin-type spans 1–252; it reads MLGHAAKLLA…LRRVKDIMAE (252 aa). 20-39 provides a ligand contact to NAD(+); that stretch reads GAGISAESGIPTFRGRNGLW. Tyr-64 and Arg-67 together coordinate substrate. Residue 98 to 101 participates in NAD(+) binding; the sequence is QNVD. His-116 acts as the Proton acceptor in catalysis. Positions 124, 127, 151, and 154 each coordinate Zn(2+). Residues 191 to 193, 217 to 219, and Ala-235 contribute to the NAD(+) site; these read GTS and NVE.

This sequence belongs to the sirtuin family. Class III subfamily. The cofactor is Zn(2+).

The protein localises to the cytoplasm. The catalysed reaction is N(6)-acetyl-L-lysyl-[protein] + NAD(+) + H2O = 2''-O-acetyl-ADP-D-ribose + nicotinamide + L-lysyl-[protein]. It catalyses the reaction N(6)-succinyl-L-lysyl-[protein] + NAD(+) + H2O = 2''-O-succinyl-ADP-D-ribose + nicotinamide + L-lysyl-[protein]. In terms of biological role, NAD-dependent lysine deacetylase and desuccinylase that specifically removes acetyl and succinyl groups on target proteins. Modulates the activities of several proteins which are inactive in their acylated form. Deacetylates the N-terminal lysine residue of Alba, the major archaeal chromatin protein and that, in turn, increases Alba's DNA binding affinity, thereby repressing transcription. This Thermococcus kodakarensis (strain ATCC BAA-918 / JCM 12380 / KOD1) (Pyrococcus kodakaraensis (strain KOD1)) protein is NAD-dependent protein deacylase.